Consider the following 678-residue polypeptide: Proprotein convertase subtilisin/kexin type 4 (678 aa).

A signal peptide spans 1–26 (MRPSQTALWLGLVLSLALLAVGWASA). A propeptide spanning residues 27 to 110 (RPPIYVSSWA…QQTLRRRVKR (84 aa)) is cleaved from the precursor. In terms of domain architecture, Peptidase S8 spans 123 to 437 (QWYMNKEIEQ…YGLLDAGLLV (315 aa)). Catalysis depends on charge relay system residues D155, H196, and S370. Residues 446–580 (TKPQKKCTIR…TLLLYGTAED (135 aa)) enclose the P/Homo B domain. N-linked (GlcNAc...) asparagine glycosylation is present at N472.

Belongs to the peptidase S8 family. Furin subfamily. As to quaternary structure, the proPCSK4 form interacts with HSPA5; the interaction takes place at the endoplasmic reticulum. In terms of processing, N-glycosylated. Post-translationally, synthesized in the endoplasmic reticulum as a zymogen, is matured by autocatalytic cleavage between the prodomain and the catalytic domain. As to expression, expressed abundantly in the testis. High levels seen in germ cells but not in Leydig, Sertoli or peritubular cells. Expressed in the pachytene spermatocytes and the round spermatids but not in the elongating spermatids. May be expressed within hormonally stimulated ovaries.

It localises to the cytoplasmic vesicle. It is found in the secretory vesicle. The protein resides in the acrosome membrane. In terms of biological role, proprotein convertase involved in the processing of hormone and other protein precursors at sites comprised of pairs of basic amino acid residues. In males, important for ADAM2 processing as well as other acrosomal proteins with roles in fertilization and critical for normal fertilization events such as sperm capacitation, acrosome reaction and binding of sperm to zona pellucida. Plays also a role in female fertility, involved in the regulation of trophoblast migration and placental development, may be through the proteolytical processing and activation of proteins such as IGF2. May also participate in folliculogenesis in the ovaries. The sequence is that of Proprotein convertase subtilisin/kexin type 4 (Pcsk4) from Rattus norvegicus (Rat).